Here is a 396-residue protein sequence, read N- to C-terminus: L-lactate dehydrogenase (396 aa).

The 380-residue stretch at 1–380 folds into the FMN hydroxy acid dehydrogenase domain; sequence MIISAASDYR…SGDSLVQELG (380 aa). Residue tyrosine 24 participates in substrate binding. 2 residues coordinate FMN: serine 106 and glutamine 127. Residue tyrosine 129 coordinates substrate. Position 155 (threonine 155) interacts with FMN. Arginine 164 provides a ligand contact to substrate. Lysine 251 is an FMN binding site. The active-site Proton acceptor is the histidine 275. Arginine 278 contributes to the substrate binding site. Residue 306–330 coordinates FMN; it reads DSGIRNGLDVVRMIALGADTVLLGR.

This sequence belongs to the FMN-dependent alpha-hydroxy acid dehydrogenase family. It depends on FMN as a cofactor.

It localises to the cell inner membrane. It carries out the reaction (S)-lactate + A = pyruvate + AH2. Functionally, catalyzes the conversion of L-lactate to pyruvate. Is coupled to the respiratory chain. The chain is L-lactate dehydrogenase from Salmonella heidelberg (strain SL476).